The primary structure comprises 115 residues: Large ribosomal subunit protein bL20c (115 aa).

Belongs to the bacterial ribosomal protein bL20 family.

Its subcellular location is the plastid. The protein localises to the chloroplast. Its function is as follows. Binds directly to 23S ribosomal RNA and is necessary for the in vitro assembly process of the 50S ribosomal subunit. It is not involved in the protein synthesizing functions of that subunit. The protein is Large ribosomal subunit protein bL20c of Physcomitrium patens (Spreading-leaved earth moss).